The following is a 273-amino-acid chain: WIMGHMVNAIYQIQEFVSLGANSIEFDINFDTDANPIYTYHGVPCDCFRSCLHYEYISDFLKALREHTLPGNPKYKENLVLFVFDLKTNSLYDSQAYTAGQKLAENIFQYYWANGEGMPVSGYLVISIPNLQHYDLIKGFRETIKAKGHNELLDRVGYDFSANDNIPDVENAYKKVGVVNHVWQSDGITNCISRGLTRAKEAVSERDGGGVINKVYVWTIDKYQSMRDALDANVDGIMTNYPNILVEVLKEDAYKDRFRLAKNYDDPFVTFEG.

H5 is an active-site residue. Mg(2+)-binding residues include E25 and D27. Catalysis depends on H41, which acts as the Nucleophile. Disulfide bonds link C45–C51 and C47–C191. Mg(2+) is bound at residue D85.

Belongs to the arthropod phospholipase D family. Class II subfamily. It depends on Mg(2+) as a cofactor. In terms of tissue distribution, expressed by the venom gland.

The protein localises to the secreted. It carries out the reaction an N-(acyl)-sphingosylphosphocholine = an N-(acyl)-sphingosyl-1,3-cyclic phosphate + choline. It catalyses the reaction an N-(acyl)-sphingosylphosphoethanolamine = an N-(acyl)-sphingosyl-1,3-cyclic phosphate + ethanolamine. The enzyme catalyses a 1-acyl-sn-glycero-3-phosphocholine = a 1-acyl-sn-glycero-2,3-cyclic phosphate + choline. The catalysed reaction is a 1-acyl-sn-glycero-3-phosphoethanolamine = a 1-acyl-sn-glycero-2,3-cyclic phosphate + ethanolamine. Dermonecrotic toxins cleave the phosphodiester linkage between the phosphate and headgroup of certain phospholipids (sphingolipid and lysolipid substrates), forming an alcohol (often choline) and a cyclic phosphate. This toxin acts on sphingomyelin (SM). It may also act on ceramide phosphoethanolamine (CPE), lysophosphatidylcholine (LPC) and lysophosphatidylethanolamine (LPE), but not on lysophosphatidylserine (LPS), and lysophosphatidylglycerol (LPG). It acts by transphosphatidylation, releasing exclusively cyclic phosphate products as second products. Induces dermonecrosis, hemolysis, increased vascular permeability, edema, inflammatory response, and platelet aggregation. The chain is Dermonecrotic toxin LapSicTox-alphaII1 from Loxosceles apachea (Apache recluse spider).